A 156-amino-acid chain; its full sequence is Small ribosomal subunit protein uS7 (156 aa).

It belongs to the universal ribosomal protein uS7 family. Part of the 30S ribosomal subunit. Contacts proteins S9 and S11.

In terms of biological role, one of the primary rRNA binding proteins, it binds directly to 16S rRNA where it nucleates assembly of the head domain of the 30S subunit. Is located at the subunit interface close to the decoding center, probably blocks exit of the E-site tRNA. This chain is Small ribosomal subunit protein uS7, found in Shewanella amazonensis (strain ATCC BAA-1098 / SB2B).